A 645-amino-acid polypeptide reads, in one-letter code: Mediator of RNA polymerase II transcription subunit 17 (645 aa).

A disordered region spans residues 215-234 (KAEDEESGSPPASPSGSGAA). Low complexity predominate over residues 222–234 (GSPPASPSGSGAA).

Belongs to the Mediator complex subunit 17 family. Component of the Mediator complex.

The protein localises to the nucleus. Component of the Mediator complex, a coactivator involved in the regulated transcription of nearly all RNA polymerase II-dependent genes. Mediator functions as a bridge to convey information from gene-specific regulatory proteins to the basal RNA polymerase II transcription machinery. Mediator is recruited to promoters by direct interactions with regulatory proteins and serves as a scaffold for the assembly of a functional preinitiation complex with RNA polymerase II and the general transcription factors. In Anopheles gambiae (African malaria mosquito), this protein is Mediator of RNA polymerase II transcription subunit 17 (MED17).